We begin with the raw amino-acid sequence, 78 residues long: Probable cytochrome c oxidase subunit 6B (78 aa).

The region spanning 21 to 64 is the CHCH domain; sequence TKHCWANYVDYYGCVKHYNGDNSKCQTFFNSMNSLCPAAWISEW. A Cx9C motif motif is present at residues 24–34; the sequence is CWANYVDYYGC. 2 cysteine pairs are disulfide-bonded: C24–C56 and C34–C45. The Cx10C motif motif lies at 45–56; the sequence is CQTFFNSMNSLC.

The protein belongs to the cytochrome c oxidase subunit 6B family. In terms of assembly, component of the cytochrome c oxidase (complex IV, CIV), a multisubunit enzyme composed of a catalytic core of 3 subunits and several supernumerary subunits. The complex exists as a monomer or a dimer and forms supercomplexes (SCs) in the inner mitochondrial membrane with ubiquinol-cytochrome c oxidoreductase (cytochrome b-c1 complex, complex III, CIII).

The protein resides in the mitochondrion inner membrane. Its pathway is energy metabolism; oxidative phosphorylation. In terms of biological role, component of the cytochrome c oxidase, the last enzyme in the mitochondrial electron transport chain which drives oxidative phosphorylation. The respiratory chain contains 3 multisubunit complexes succinate dehydrogenase (complex II, CII), ubiquinol-cytochrome c oxidoreductase (cytochrome b-c1 complex, complex III, CIII) and cytochrome c oxidase (complex IV, CIV), that cooperate to transfer electrons derived from NADH and succinate to molecular oxygen, creating an electrochemical gradient over the inner membrane that drives transmembrane transport and the ATP synthase. Cytochrome c oxidase is the component of the respiratory chain that catalyzes the reduction of oxygen to water. Electrons originating from reduced cytochrome c in the intermembrane space (IMS) are transferred via the dinuclear copper A center (CU(A)) of subunit 2 and heme A of subunit 1 to the active site in subunit 1, a binuclear center (BNC) formed by heme A3 and copper B (CU(B)). The BNC reduces molecular oxygen to 2 water molecules using 4 electrons from cytochrome c in the IMS and 4 protons from the mitochondrial matrix. This Dictyostelium discoideum (Social amoeba) protein is Probable cytochrome c oxidase subunit 6B.